Reading from the N-terminus, the 202-residue chain is Rho GDP-dissociation inhibitor (202 aa).

Position 2 is an N-acetylalanine (Ala-2). Thr-27 is modified (phosphothreonine). Ser-40 bears the Phosphoserine mark.

The protein belongs to the Rho GDI family.

Its subcellular location is the cytoplasm. In terms of biological role, regulates the GDP/GTP exchange reaction of the Rho proteins by inhibiting the dissociation of GDP from them, and the subsequent binding of GTP to them. This chain is Rho GDP-dissociation inhibitor (RDI1), found in Saccharomyces cerevisiae (strain ATCC 204508 / S288c) (Baker's yeast).